The following is a 271-amino-acid chain: TIP41-like protein (271 aa).

Lysine 106 carries the N6-acetyllysine modification. The interval 173–271 is interaction with PPP2CA; sequence RVMPSSFFLL…PVDSQSTPSE (99 aa). Serine 265 and serine 270 each carry phosphoserine.

The protein belongs to the TIP41 family. In terms of assembly, interacts with PPP2CA. Interacts with PPP2CB, PPP4C and PPP6C. Interacts with IGBP1; the interaction is dependent on PPP2CA. Associates with a protein phosphatase 2A PP2A(C):IGBP1 complex. Interacts with PPP4C and PPP4R2.

It localises to the cytoplasm. Functionally, may be a allosteric regulator of serine/threonine-protein phosphatase 2A (PP2A). Inhibits catalytic activity of the PP2A(D) core complex in vitro. The PP2A(C):TIPRL complex does not show phosphatase activity. Acts as a negative regulator of serine/threonine-protein phosphatase 4 probably by inhibiting the formation of the active PPP4C:PPP4R2 complex; the function is proposed to implicate it in DNA damage response by promoting H2AX phosphorylated on Ser-140 (gamma-H2AX). May play a role in the regulation of ATM/ATR signaling pathway controlling DNA replication and repair. The chain is TIP41-like protein (Tiprl) from Mus musculus (Mouse).